Reading from the N-terminus, the 231-residue chain is Ion-translocating oxidoreductase complex subunit E (231 aa).

7 helical membrane-spanning segments follow: residues 18–38 (GLVQ…ITNA), 39–59 (LGLG…VSLV), 69–89 (IPVF…LINA), 93–113 (NLYL…VIIG), 127–147 (SAFD…VLGA), 157–177 (LFGG…IHVW), and 182–202 (PFLL…LIAL).

It belongs to the NqrDE/RnfAE family. The complex is composed of six subunits: RnfA, RnfB, RnfC, RnfD, RnfE and RnfG.

It is found in the cell inner membrane. In terms of biological role, part of a membrane-bound complex that couples electron transfer with translocation of ions across the membrane. The chain is Ion-translocating oxidoreductase complex subunit E from Shewanella frigidimarina (strain NCIMB 400).